Consider the following 459-residue polypeptide: Argininosuccinate lyase (459 aa).

This sequence belongs to the lyase 1 family. Argininosuccinate lyase subfamily.

The protein localises to the cytoplasm. The catalysed reaction is 2-(N(omega)-L-arginino)succinate = fumarate + L-arginine. It participates in amino-acid biosynthesis; L-arginine biosynthesis; L-arginine from L-ornithine and carbamoyl phosphate: step 3/3. The polypeptide is Argininosuccinate lyase (Staphylococcus aureus (strain Mu3 / ATCC 700698)).